Here is a 184-residue protein sequence, read N- to C-terminus: Oligoribonuclease (184 aa).

Residues 8-171 (LIWIDLEMTG…DDIRESIAEL (164 aa)) enclose the Exonuclease domain. The active site involves Tyr129.

It belongs to the oligoribonuclease family.

The protein localises to the cytoplasm. Functionally, 3'-to-5' exoribonuclease specific for small oligoribonucleotides. The protein is Oligoribonuclease of Pasteurella multocida (strain Pm70).